The primary structure comprises 397 residues: Succinate--CoA ligase [ADP-forming] subunit beta (397 aa).

The ATP-grasp domain maps to 9–254 (KALLKGYGAP…ETEEDAKEIE (246 aa)). ATP-binding positions include Lys46, 53–55 (GRG), Glu109, Ala112, and Glu117. Mg(2+) contacts are provided by Asn209 and Asp223. Substrate-binding positions include Asn274 and 331 to 333 (GIM).

This sequence belongs to the succinate/malate CoA ligase beta subunit family. In terms of assembly, heterotetramer of two alpha and two beta subunits. Requires Mg(2+) as cofactor.

The catalysed reaction is succinate + ATP + CoA = succinyl-CoA + ADP + phosphate. It catalyses the reaction GTP + succinate + CoA = succinyl-CoA + GDP + phosphate. The protein operates within carbohydrate metabolism; tricarboxylic acid cycle; succinate from succinyl-CoA (ligase route): step 1/1. Succinyl-CoA synthetase functions in the citric acid cycle (TCA), coupling the hydrolysis of succinyl-CoA to the synthesis of either ATP or GTP and thus represents the only step of substrate-level phosphorylation in the TCA. The beta subunit provides nucleotide specificity of the enzyme and binds the substrate succinate, while the binding sites for coenzyme A and phosphate are found in the alpha subunit. This Rhizobium leguminosarum bv. trifolii (strain WSM2304) protein is Succinate--CoA ligase [ADP-forming] subunit beta.